Here is a 251-residue protein sequence, read N- to C-terminus: Ubiquinone/menaquinone biosynthesis C-methyltransferase UbiE (251 aa).

Residues T74, D95, 123 to 124 (NA), and S140 contribute to the S-adenosyl-L-methionine site.

Belongs to the class I-like SAM-binding methyltransferase superfamily. MenG/UbiE family.

The enzyme catalyses a 2-demethylmenaquinol + S-adenosyl-L-methionine = a menaquinol + S-adenosyl-L-homocysteine + H(+). It carries out the reaction a 2-methoxy-6-(all-trans-polyprenyl)benzene-1,4-diol + S-adenosyl-L-methionine = a 5-methoxy-2-methyl-3-(all-trans-polyprenyl)benzene-1,4-diol + S-adenosyl-L-homocysteine + H(+). It participates in quinol/quinone metabolism; menaquinone biosynthesis; menaquinol from 1,4-dihydroxy-2-naphthoate: step 2/2. Its pathway is cofactor biosynthesis; ubiquinone biosynthesis. Functionally, methyltransferase required for the conversion of demethylmenaquinol (DMKH2) to menaquinol (MKH2) and the conversion of 2-polyprenyl-6-methoxy-1,4-benzoquinol (DDMQH2) to 2-polyprenyl-3-methyl-6-methoxy-1,4-benzoquinol (DMQH2). This chain is Ubiquinone/menaquinone biosynthesis C-methyltransferase UbiE, found in Escherichia coli O9:H4 (strain HS).